A 227-amino-acid polypeptide reads, in one-letter code: Probable proteasome subunit beta type-2 (227 aa).

Positions M1 to G6 are cleaved as a propeptide — removed in mature form. The active-site Nucleophile is the T7.

This sequence belongs to the peptidase T1B family. In terms of assembly, the 26S proteasome consists of a 20S proteasome core and two 19S regulatory subunits. The 20S proteasome core is composed of 28 subunits that are arranged in four stacked rings, resulting in a barrel-shaped structure. The two end rings are each formed by seven alpha subunits, and the two central rings are each formed by seven beta subunits. The catalytic chamber with the active sites is on the inside of the barrel.

Its subcellular location is the cytoplasm. The protein localises to the nucleus. The enzyme catalyses Cleavage of peptide bonds with very broad specificity.. Functionally, the proteasome degrades poly-ubiquitinated proteins in the cytoplasm and in the nucleus. It is essential for the regulated turnover of proteins and for the removal of misfolded proteins. The proteasome is a multicatalytic proteinase complex that is characterized by its ability to cleave peptides with Arg, Phe, Tyr, Leu, and Glu adjacent to the leaving group at neutral or slightly basic pH. It has an ATP-dependent proteolytic activity. This chain is Probable proteasome subunit beta type-2 (PUP1), found in Encephalitozoon cuniculi (strain GB-M1) (Microsporidian parasite).